The chain runs to 683 residues: MAALQALPLSIDQNAEVSGSQSHTNTRSPVTENTMGSVSSLISGRTYHDKQCKASELSNKCRKPTNMPNCFKQQEGLIKSNYSSQDPLFNGLPTKKPSTTTSGNNGNYVYVNEDFKEEWHEPRVPISPSSDAEDIREERALNGNIRGPPPKLIPVSGKLEKNVEKTLIKPTAFKPVVPKKRNSSLQYLVQRNGGPGLSESQSSLNLLFNGNAAGIPEKHNLLSCRNSTHSGTMSDSGRTSLSSLPTYSTNCSHQMDPVSVSMGHINLDNHTNINGYSDRAPRGRTRPTNSDSGRSSSSKSTGSLSGRGNPSSDSGSCDRSPILSDEILIRELEEKLKDREMELQQLKENLDENEAAICQVYEEKQKRCEQEMEELRQSCALKMKQAAQKAQRLQQVLQLQIFQLQQEKKKLQEDFSQLLQERELLEKRCASFEREQTEFGPRLEETKWEVCQKSGEISLLKQQLKDSQAELAQKSNEILLLRAQVREARSDLQISEEQVQELQDTAHTKTLELEVCENELQRKKNEAELLREKASKLDQEVAGLREAAVANLRHGLCLCHEKEDPFLLYESDEAKAQRQNADNLQGLQQYVERLREALTSERRRYQEQADSFEDERRIWQEEKEKVIRYQKQLQHNYIQMYQQNRELERDIKQLSLELEARELDEFDLHGAEIQFEEITATEI.

Disordered stretches follow at residues methionine 1 to serine 37, tyrosine 82 to asparagine 107, and methionine 262 to serine 320. Composition is skewed to polar residues over residues isoleucine 11 to serine 37 and lysine 96 to asparagine 107. Residues serine 290–glycine 308 are compositionally biased toward low complexity. The stretch at serine 324–glutamate 665 forms a coiled coil.

It belongs to the LZTS2 family.

The protein resides in the cytoplasm. It localises to the cytoskeleton. It is found in the microtubule organizing center. The protein localises to the centrosome. Its function is as follows. Negative regulator of katanin-mediated microtubule severing and release from the centrosome. Required for central spindle formation and the completion of cytokinesis. Negative regulator of the Wnt signaling pathway. Represses beta-catenin-mediated transcriptional activation by promoting the nuclear exclusion of beta-catenin. In Xenopus tropicalis (Western clawed frog), this protein is Leucine zipper putative tumor suppressor 2 homolog (lzts2).